The primary structure comprises 297 residues: Ribosomal RNA small subunit methyltransferase H (297 aa).

S-adenosyl-L-methionine-binding positions include 34–36 (GGH), Asp-54, Phe-81, Asp-99, and Gln-106.

Belongs to the methyltransferase superfamily. RsmH family.

It localises to the cytoplasm. It carries out the reaction cytidine(1402) in 16S rRNA + S-adenosyl-L-methionine = N(4)-methylcytidine(1402) in 16S rRNA + S-adenosyl-L-homocysteine + H(+). In terms of biological role, specifically methylates the N4 position of cytidine in position 1402 (C1402) of 16S rRNA. The chain is Ribosomal RNA small subunit methyltransferase H from Chlamydia pneumoniae (Chlamydophila pneumoniae).